Consider the following 71-residue polypeptide: DNA-directed RNA polymerase subunit epsilon (71 aa).

The protein belongs to the RNA polymerase subunit epsilon family. In terms of assembly, RNAP is composed of a core of 2 alpha, a beta and a beta' subunit. The core is associated with a delta subunit, and at least one of epsilon or omega. When a sigma factor is associated with the core the holoenzyme is formed, which can initiate transcription.

It carries out the reaction RNA(n) + a ribonucleoside 5'-triphosphate = RNA(n+1) + diphosphate. Its function is as follows. A non-essential component of RNA polymerase (RNAP). The chain is DNA-directed RNA polymerase subunit epsilon from Anoxybacillus flavithermus (strain DSM 21510 / WK1).